The chain runs to 160 residues: Transcription elongation factor GreA (160 aa).

The stretch at 3-84 (NIVDDKILLT…SKAKIIKADL (82 aa)) forms a coiled coil.

It belongs to the GreA/GreB family.

In terms of biological role, necessary for efficient RNA polymerase transcription elongation past template-encoded arresting sites. The arresting sites in DNA have the property of trapping a certain fraction of elongating RNA polymerases that pass through, resulting in locked ternary complexes. Cleavage of the nascent transcript by cleavage factors such as GreA or GreB allows the resumption of elongation from the new 3'terminus. GreA releases sequences of 2 to 3 nucleotides. The protein is Transcription elongation factor GreA of Mesomycoplasma hyopneumoniae (strain J / ATCC 25934 / NCTC 10110) (Mycoplasma hyopneumoniae).